The following is a 308-amino-acid chain: Aspartate carbamoyltransferase catalytic subunit (308 aa).

Residues arginine 49 and threonine 50 each coordinate carbamoyl phosphate. Position 77 (lysine 77) interacts with L-aspartate. 3 residues coordinate carbamoyl phosphate: arginine 99, histidine 127, and glutamine 130. L-aspartate is bound by residues arginine 160 and arginine 211. Residues alanine 252 and proline 253 each coordinate carbamoyl phosphate.

The protein belongs to the aspartate/ornithine carbamoyltransferase superfamily. ATCase family. In terms of assembly, heterododecamer (2C3:3R2) of six catalytic PyrB chains organized as two trimers (C3), and six regulatory PyrI chains organized as three dimers (R2).

The catalysed reaction is carbamoyl phosphate + L-aspartate = N-carbamoyl-L-aspartate + phosphate + H(+). Its pathway is pyrimidine metabolism; UMP biosynthesis via de novo pathway; (S)-dihydroorotate from bicarbonate: step 2/3. Functionally, catalyzes the condensation of carbamoyl phosphate and aspartate to form carbamoyl aspartate and inorganic phosphate, the committed step in the de novo pyrimidine nucleotide biosynthesis pathway. The chain is Aspartate carbamoyltransferase catalytic subunit from Bacillus caldolyticus.